The chain runs to 340 residues: ATPase BagA (340 aa).

Residues Gly-31, Gly-33, Lys-34, Ser-35, Thr-36, Asn-240, Pro-316, and Val-318 each coordinate ATP.

Belongs to the arsA ATPase family. BagA/BagB subfamily. As to quaternary structure, forms a heterodimer composed of BagA and BagB. Interacts with Rv1509. Also interacts with a large number of proteins, including proteins required for mycolic acid biosynthesis.

The ATPase activity of the BagAB complex is not stimulated by antimonite, an arsenite substitute, suggesting that BagAB is not a transporter for this family of elements. Its function is as follows. Component of the heterodimeric BagAB ATPase complex, whose two subunits are actively involved in ATP hydrolysis. The ATPase activity is required to mediate resistance against nitric oxide (NO) and elevated levels of glycerol. The sequence is that of ATPase BagA from Mycobacterium tuberculosis (strain ATCC 25618 / H37Rv).